Reading from the N-terminus, the 54-residue chain is Large ribosomal subunit protein bL32c (54 aa).

Belongs to the bacterial ribosomal protein bL32 family.

It is found in the plastid. The protein resides in the chloroplast. The chain is Large ribosomal subunit protein bL32c from Cucumis sativus (Cucumber).